The primary structure comprises 273 residues: 1,4-dihydroxy-2-naphthoyl-CoA synthase (273 aa).

Substrate contacts are provided by residues Arg-34, 73–77, Tyr-85, 117–121, Thr-143, Ser-149, Tyr-246, and Lys-261; these read SGGDQ and YAVGG. Residue 142–144 coordinates hydrogencarbonate; the sequence is QTG. The segment covering 254-265 has biased composition (basic and acidic residues); it reads GRDAFKEKRDPD. Positions 254–273 are disordered; it reads GRDAFKEKRDPDFDQFPKFP.

Belongs to the enoyl-CoA hydratase/isomerase family. MenB subfamily. Hydrogencarbonate serves as cofactor.

The catalysed reaction is 2-succinylbenzoyl-CoA + H(+) = 1,4-dihydroxy-2-naphthoyl-CoA + H2O. The protein operates within quinol/quinone metabolism; 1,4-dihydroxy-2-naphthoate biosynthesis; 1,4-dihydroxy-2-naphthoate from chorismate: step 6/7. It participates in quinol/quinone metabolism; menaquinone biosynthesis. Its function is as follows. Converts o-succinylbenzoyl-CoA (OSB-CoA) to 1,4-dihydroxy-2-naphthoyl-CoA (DHNA-CoA). The polypeptide is 1,4-dihydroxy-2-naphthoyl-CoA synthase (Staphylococcus aureus (strain Mu50 / ATCC 700699)).